Here is a 190-residue protein sequence, read N- to C-terminus: GTP cyclohydrolase 1 (190 aa).

Zn(2+) is bound by residues Cys-75, His-78, and Cys-146.

Belongs to the GTP cyclohydrolase I family. Homomer.

The catalysed reaction is GTP + H2O = 7,8-dihydroneopterin 3'-triphosphate + formate + H(+). Its pathway is cofactor biosynthesis; 7,8-dihydroneopterin triphosphate biosynthesis; 7,8-dihydroneopterin triphosphate from GTP: step 1/1. The sequence is that of GTP cyclohydrolase 1 from Campylobacter lari (strain RM2100 / D67 / ATCC BAA-1060).